The primary structure comprises 109 residues: Phosphoribosyl-AMP cyclohydrolase (109 aa).

Mg(2+) is bound at residue D76. Position 77 (C77) interacts with Zn(2+). 2 residues coordinate Mg(2+): D78 and D80. 2 residues coordinate Zn(2+): C93 and C100.

The protein belongs to the PRA-CH family. In terms of assembly, homodimer. It depends on Mg(2+) as a cofactor. The cofactor is Zn(2+).

It is found in the cytoplasm. It carries out the reaction 1-(5-phospho-beta-D-ribosyl)-5'-AMP + H2O = 1-(5-phospho-beta-D-ribosyl)-5-[(5-phospho-beta-D-ribosylamino)methylideneamino]imidazole-4-carboxamide. The protein operates within amino-acid biosynthesis; L-histidine biosynthesis; L-histidine from 5-phospho-alpha-D-ribose 1-diphosphate: step 3/9. Catalyzes the hydrolysis of the adenine ring of phosphoribosyl-AMP. The sequence is that of Phosphoribosyl-AMP cyclohydrolase from Streptococcus mutans serotype c (strain ATCC 700610 / UA159).